The sequence spans 218 residues: Peptide methionine sulfoxide reductase MsrA (218 aa).

Cys-57 is a catalytic residue.

This sequence belongs to the MsrA Met sulfoxide reductase family.

The enzyme catalyses L-methionyl-[protein] + [thioredoxin]-disulfide + H2O = L-methionyl-(S)-S-oxide-[protein] + [thioredoxin]-dithiol. It carries out the reaction [thioredoxin]-disulfide + L-methionine + H2O = L-methionine (S)-S-oxide + [thioredoxin]-dithiol. In terms of biological role, has an important function as a repair enzyme for proteins that have been inactivated by oxidation. Catalyzes the reversible oxidation-reduction of methionine sulfoxide in proteins to methionine. The polypeptide is Peptide methionine sulfoxide reductase MsrA (Brucella abortus (strain S19)).